Here is a 214-residue protein sequence, read N- to C-terminus: CRISPR-associated protein Cas5 (214 aa).

The protein belongs to the CRISPR-associated protein Cas5 family.

Its function is as follows. CRISPR (clustered regularly interspaced short palindromic repeat) is an adaptive immune system that provides protection against mobile genetic elements (viruses, transposable elements and conjugative plasmids). CRISPR clusters contain spacers, sequences complementary to antecedent mobile elements, and target invading nucleic acids. CRISPR clusters are transcribed and processed into CRISPR RNA (crRNA). In terms of biological role, has a role in fruiting body development, sporulation and aggregation. The polypeptide is CRISPR-associated protein Cas5 (devS) (Myxococcus xanthus (strain DK1622)).